Here is a 367-residue protein sequence, read N- to C-terminus: Probable 7-methylxanthine methyltransferase 2 (367 aa).

Y20 serves as a coordination point for S-adenosyl-L-homocysteine. T27 serves as a coordination point for theobromine. S-adenosyl-L-homocysteine contacts are provided by C64, Q69, D101, L102, S134, and F135. Residues Y152, H155, and W156 each contribute to the theobromine site. Mg(2+) contacts are provided by N172, D258, F260, and N261. Theobromine is bound at residue F313.

This sequence belongs to the methyltransferase superfamily. Type-7 methyltransferase family. Mg(2+) is required as a cofactor.

The enzyme catalyses 7-methylxanthine + S-adenosyl-L-methionine = theobromine + S-adenosyl-L-homocysteine + H(+). It participates in alkaloid biosynthesis. Its function is as follows. Involved in the biosynthesis of theobromine. This chain is Probable 7-methylxanthine methyltransferase 2, found in Theobroma cacao (Cacao).